The primary structure comprises 206 residues: Guanylate kinase (206 aa).

The Guanylate kinase-like domain occupies 3-183 (GNLYILSAPS…ALTELKSILT (181 aa)). 10 to 17 (APSGAGKS) is an ATP binding site.

The protein belongs to the guanylate kinase family.

Its subcellular location is the cytoplasm. It catalyses the reaction GMP + ATP = GDP + ADP. Functionally, essential for recycling GMP and indirectly, cGMP. This chain is Guanylate kinase, found in Haemophilus ducreyi (strain 35000HP / ATCC 700724).